A 113-amino-acid chain; its full sequence is Protein USP2 (113 aa).

A signal peptide spans 1-18 (MKITMFFAALSAASGVFA). Repeat copies occupy residues 32–37 (IGAGVG), 40–45 (IGAGVG), 46–49 (SYGY), 50–53 (PYGA), 59–65 (LQLLPLR), and 69–75 (LRRLPLR). The interval 32–45 (IGAGVGIGIGAGVG) is 2 X 6 AA repeats. The interval 46-53 (SYGYPYGA) is 2 X 4 AA approximate tandem repeats. The 2 X 7 AA approximate repeats stretch occupies residues 59 to 75 (LQLLPLRWLPLRRLPLR).

Its subcellular location is the secreted. The polypeptide is Protein USP2 (USP2) (Puccinia graminis (Black stem rust fungus)).